Consider the following 554-residue polypeptide: Glutamine--tRNA ligase (554 aa).

Residues 34–44 carry the 'HIGH' region motif; it reads PEPNGYLHIGH. ATP contacts are provided by residues 35–37 and 41–47; these read EPN and HIGHAKS. L-glutamine is bound by residues Asp-67 and Tyr-212. ATP-binding positions include Thr-231, 261-262, and 269-271; these read RL and MSK. Positions 268–272 match the 'KMSKS' region motif; that stretch reads VMSKR. The segment at 317–324 is interaction with tRNA; it reads TKQDNTIE.

It belongs to the class-I aminoacyl-tRNA synthetase family. As to quaternary structure, monomer.

The protein localises to the cytoplasm. The catalysed reaction is tRNA(Gln) + L-glutamine + ATP = L-glutaminyl-tRNA(Gln) + AMP + diphosphate. This chain is Glutamine--tRNA ligase, found in Shigella dysenteriae serotype 1 (strain Sd197).